A 144-amino-acid chain; its full sequence is Transmembrane protein 170A (144 aa).

Over 1 to 50 (MEREGSGGGGGSAGLLQQILSLKLVPRVGNGTLCPNSTSLCSFPEMWYGV) the chain is Extracellular. N30 and N36 each carry an N-linked (GlcNAc...) asparagine glycan. A helical transmembrane segment spans residues 51–71 (FLWALMSSVFFHVPAGLLALF). The Cytoplasmic portion of the chain corresponds to 72–85 (TLRHHKYGRFMSVS). Residues 86–106 (ILLMGIVGPITAGILTSAAIA) traverse the membrane as a helical segment. The Extracellular segment spans residues 107-116 (GVYRAAGKEM). The chain crosses the membrane as a helical span at residues 117-137 (IPFEALTLGTGQTFCVVVVSF). Over 138 to 144 (LRVLATL) the chain is Cytoplasmic.

It belongs to the TMEM170 family. As to quaternary structure, interacts with RTN4.

The protein localises to the endoplasmic reticulum membrane. It is found in the nucleus envelope. In terms of biological role, acts as a regulator of endoplasmic reticulum (ER) and nuclear envelope (NE) morphogenesis. Affects the ratio between tubular ER and ER sheets by promoting sheet formation at the expense of tubules. Influences NE expansion, nuclear pore complex formation and proper localization of inner nuclear membrane proteins. This is Transmembrane protein 170A (Tmem170a) from Mus musculus (Mouse).